Consider the following 572-residue polypeptide: Sulfite reductase [NADPH] hemoprotein beta-component (572 aa).

The [4Fe-4S] cluster site is built by Cys-437, Cys-443, Cys-482, and Cys-486. Cys-486 serves as a coordination point for siroheme.

The protein belongs to the nitrite and sulfite reductase 4Fe-4S domain family. As to quaternary structure, alpha(8)-beta(8). The alpha component is a flavoprotein, the beta component is a hemoprotein. The cofactor is siroheme. It depends on [4Fe-4S] cluster as a cofactor.

It carries out the reaction hydrogen sulfide + 3 NADP(+) + 3 H2O = sulfite + 3 NADPH + 4 H(+). Its pathway is sulfur metabolism; hydrogen sulfide biosynthesis; hydrogen sulfide from sulfite (NADPH route): step 1/1. In terms of biological role, component of the sulfite reductase complex that catalyzes the 6-electron reduction of sulfite to sulfide. This is one of several activities required for the biosynthesis of L-cysteine from sulfate. This Lysinibacillus sphaericus (strain C3-41) protein is Sulfite reductase [NADPH] hemoprotein beta-component.